We begin with the raw amino-acid sequence, 423 residues long: MAKEKEHINLAFIGHVDHGKSTLVGRLLYDTGVIEDKDLGEGEDKFRVIMDTLEEERERGVTIDLAHTKFETDNYEFTIVDCPGHRDFVKNMITGASQADAAILVVAADDGVMPQTKEHAFLAKTLGIDQLIVAINKMDLVDYDENRYEEVKQEVAELLKTIGYNVDEIPFIPISAFEGDNVVEKSDNTPWYDGPTLLEALDNLEPPEKPTDKPLRIPIQDVYSITGVGTVPVGRVETGVLEVGDTVRFEPAYTATGGRKGEGEVRSIEMHHEEIERAEPGDNIGFNVKGVGKNDISRGDVACHPDEPATVVTPDDTFIAQIVVLQHPSAITAGYTPVFHCHTAQVACKFEELIEKIDPATGEVIEENPDFLKTGEAAKVRIRPTKPMVIEEVSFIPQLGRFAIRDMGQTVAAGMCVKIEKEE.

In terms of domain architecture, tr-type G spans 5-211 (KEHINLAFIG…DNLEPPEKPT (207 aa)). Positions 14–21 (GHVDHGKS) are G1. 14–21 (GHVDHGKS) provides a ligand contact to GTP. Position 21 (Ser21) interacts with Mg(2+). Residues 60 to 64 (GVTID) form a G2 region. The interval 81–84 (DCPG) is G3. GTP contacts are provided by residues 81–85 (DCPGH) and 136–139 (NKMD). A G4 region spans residues 136–139 (NKMD). Positions 175 to 177 (SAF) are G5.

The protein belongs to the TRAFAC class translation factor GTPase superfamily. Classic translation factor GTPase family. EF-Tu/EF-1A subfamily.

It localises to the cytoplasm. It catalyses the reaction GTP + H2O = GDP + phosphate + H(+). In terms of biological role, GTP hydrolase that promotes the GTP-dependent binding of aminoacyl-tRNA to the A-site of ribosomes during protein biosynthesis. In Methanopyrus kandleri (strain AV19 / DSM 6324 / JCM 9639 / NBRC 100938), this protein is Elongation factor 1-alpha.